We begin with the raw amino-acid sequence, 197 residues long: LexA repressor (197 aa).

The H-T-H motif DNA-binding region spans 28 to 47; that stretch reads VREIARRFRITPRGALLHLI. Active-site for autocatalytic cleavage activity residues include Ser-119 and Lys-156.

This sequence belongs to the peptidase S24 family. In terms of assembly, homodimer.

It carries out the reaction Hydrolysis of Ala-|-Gly bond in repressor LexA.. In terms of biological role, represses a number of genes involved in the response to DNA damage (SOS response), including recA and lexA. In the presence of single-stranded DNA, RecA interacts with LexA causing an autocatalytic cleavage which disrupts the DNA-binding part of LexA, leading to derepression of the SOS regulon and eventually DNA repair. This is LexA repressor from Thermotoga petrophila (strain ATCC BAA-488 / DSM 13995 / JCM 10881 / RKU-1).